The sequence spans 494 residues: Ubiquitin carboxyl-terminal hydrolase 14 (494 aa).

The 77-residue stretch at 4 to 80 (YSVTVKWGKE…MMGSADALPE (77 aa)) folds into the Ubiquitin-like domain. Threonine 52 carries the phosphothreonine modification. Residues 105–483 (CGLTNLGNTC…IAYVLLYGPR (379 aa)) form the USP domain. The active-site Nucleophile is cysteine 114. Serine 143 and serine 148 each carry phosphoserine. A Phosphothreonine modification is found at threonine 235. Residues serine 237, serine 302, and serine 432 each carry the phosphoserine modification. Histidine 435 functions as the Proton acceptor in the catalytic mechanism. Lysine 449 bears the N6-acetyllysine mark.

It belongs to the peptidase C19 family. USP14/UBP6 subfamily. As to quaternary structure, homodimer (Potential). Associates with the 26S proteasome. Interacts with FANCC, CXCR4 and ERN1. Interacts with TRIM14; this interaction recruits USP14 to cleave ubiquitin chains of CGAS and KDM4D.

The protein resides in the cytoplasm. It localises to the cell membrane. It carries out the reaction Thiol-dependent hydrolysis of ester, thioester, amide, peptide and isopeptide bonds formed by the C-terminal Gly of ubiquitin (a 76-residue protein attached to proteins as an intracellular targeting signal).. Functionally, proteasome-associated deubiquitinase which releases ubiquitin from the proteasome targeted ubiquitinated proteins. Ensures the regeneration of ubiquitin at the proteasome. Is a reversibly associated subunit of the proteasome and a large fraction of proteasome-free protein exists within the cell. Required for the degradation of the chemokine receptor CXCR4 which is critical for CXCL12-induced cell chemotaxis. Also serves as a physiological inhibitor of endoplasmic reticulum-associated degradation (ERAD) under the non-stressed condition by inhibiting the degradation of unfolded endoplasmic reticulum proteins via interaction with ERN1. Indispensable for synaptic development and function at neuromuscular junctions (NMJs). Plays a role in the innate immune defense against viruses by stabilizing the viral DNA sensor CGAS and thus inhibiting its autophagic degradation. Inhibits OPTN-mediated selective autophagic degradation of KDM4D and thereby negatively regulates H3K9me2 and H3K9me3. This chain is Ubiquitin carboxyl-terminal hydrolase 14 (USP14), found in Homo sapiens (Human).